We begin with the raw amino-acid sequence, 595 residues long: DNA primase (595 aa).

A CHC2-type zinc finger spans residues 38–62; it reads CPFHQEKTPSFTVSDSKRFFYCFGC. A Toprim domain is found at 250 to 332; it reads NHSILVEGYF…EKKISFIRLP (83 aa). Mg(2+) contacts are provided by Glu256, Asp300, and Asp302.

The protein belongs to the DnaG primase family. As to quaternary structure, monomer. Interacts with DnaB. Zn(2+) serves as cofactor. The cofactor is Mg(2+).

The catalysed reaction is ssDNA + n NTP = ssDNA/pppN(pN)n-1 hybrid + (n-1) diphosphate.. Functionally, RNA polymerase that catalyzes the synthesis of short RNA molecules used as primers for DNA polymerase during DNA replication. This is DNA primase from Rickettsia felis (strain ATCC VR-1525 / URRWXCal2) (Rickettsia azadi).